The sequence spans 202 residues: NADH-quinone oxidoreductase subunit C (202 aa).

Belongs to the complex I 30 kDa subunit family. NDH-1 is composed of 14 different subunits. Subunits NuoB, C, D, E, F, and G constitute the peripheral sector of the complex.

It localises to the cell inner membrane. The catalysed reaction is a quinone + NADH + 5 H(+)(in) = a quinol + NAD(+) + 4 H(+)(out). NDH-1 shuttles electrons from NADH, via FMN and iron-sulfur (Fe-S) centers, to quinones in the respiratory chain. The immediate electron acceptor for the enzyme in this species is believed to be ubiquinone. Couples the redox reaction to proton translocation (for every two electrons transferred, four hydrogen ions are translocated across the cytoplasmic membrane), and thus conserves the redox energy in a proton gradient. The polypeptide is NADH-quinone oxidoreductase subunit C (Acidovorax sp. (strain JS42)).